A 550-amino-acid chain; its full sequence is U-box domain-containing protein 40 (550 aa).

A compositionally biased stretch (basic and acidic residues) spans 19–29 (KSDNLSRRESL). A disordered region spans residues 19–55 (KSDNLSRRESLAGKSKWRTSLSRSSSSSSSNNNSPTK). Over residues 38 to 52 (SLSRSSSSSSSNNNS) the composition is skewed to low complexity. The U-box domain occupies 57-127 (EIPAEFLCPI…HSWCERRCFP (71 aa)). 5 ARM repeats span residues 260–299 (ESSR…NLSL), 301–340 (KSNK…SLAL), 342–381 (DENK…HLSL), 383–420 (QSNR…NMAS), and 422–464 (PVSR…GLSH).

It carries out the reaction S-ubiquitinyl-[E2 ubiquitin-conjugating enzyme]-L-cysteine + [acceptor protein]-L-lysine = [E2 ubiquitin-conjugating enzyme]-L-cysteine + N(6)-ubiquitinyl-[acceptor protein]-L-lysine.. It participates in protein modification; protein ubiquitination. Its function is as follows. Functions as an E3 ubiquitin ligase. The sequence is that of U-box domain-containing protein 40 (PUB40) from Arabidopsis thaliana (Mouse-ear cress).